Here is a 318-residue protein sequence, read N- to C-terminus: Aspartate carbamoyltransferase catalytic subunit (318 aa).

Residues arginine 59 and threonine 60 each coordinate carbamoyl phosphate. Lysine 87 provides a ligand contact to L-aspartate. Carbamoyl phosphate-binding residues include arginine 109, histidine 137, and glutamine 140. L-aspartate is bound by residues arginine 170 and arginine 224. Positions 265 and 266 each coordinate carbamoyl phosphate.

The protein belongs to the aspartate/ornithine carbamoyltransferase superfamily. ATCase family. Heterododecamer (2C3:3R2) of six catalytic PyrB chains organized as two trimers (C3), and six regulatory PyrI chains organized as three dimers (R2).

It carries out the reaction carbamoyl phosphate + L-aspartate = N-carbamoyl-L-aspartate + phosphate + H(+). It participates in pyrimidine metabolism; UMP biosynthesis via de novo pathway; (S)-dihydroorotate from bicarbonate: step 2/3. Catalyzes the condensation of carbamoyl phosphate and aspartate to form carbamoyl aspartate and inorganic phosphate, the committed step in the de novo pyrimidine nucleotide biosynthesis pathway. In Allorhizobium ampelinum (strain ATCC BAA-846 / DSM 112012 / S4) (Agrobacterium vitis (strain S4)), this protein is Aspartate carbamoyltransferase catalytic subunit.